We begin with the raw amino-acid sequence, 588 residues long: Putative ABC transporter ATP-binding protein PAM_020 (588 aa).

ABC transporter domains are found at residues 6-247 and 317-551; these read IIFK…GIQE and LQLQ…TSLN. Residues 40 to 47 and 351 to 358 each bind ATP; these read GKNGSGKS.

This sequence belongs to the ABC transporter superfamily.

The protein resides in the cell membrane. In terms of biological role, probably part of an ABC transporter complex. Responsible for energy coupling to the transport system. The chain is Putative ABC transporter ATP-binding protein PAM_020 from Onion yellows phytoplasma (strain OY-M).